The primary structure comprises 580 residues: Guanine nucleotide-binding protein alpha-4 subunit (580 aa).

Residues 1–10 are compositionally biased toward polar residues; that stretch reads MSPSVSSPQL. The disordered stretch occupies residues 1 to 28; it reads MSPSVSSPQLRHTKSNRAISRIDRTDPL. The G-alpha domain maps to 93–579; that stretch reads RVYKMVLLGQ…RENLKLTGLV (487 aa). The tract at residues 96-109 is G1 motif; sequence KMVLLGQAGAGKTT. 101-108 provides a ligand contact to GTP; sequence GQAGAGKT. Disordered stretches follow at residues 160-196 and 302-325; these read KSSE…PNDA and GRAA…KDNS. The span at 167-183 shows a compositional bias: low complexity; sequence LESSTSASTSTSASASS. The segment at 387 to 395 is G2 motif; the sequence is DILHSRVRT. GTP-binding positions include 389–395, 415–419, 484–487, and Ala-551; these read LHSRVRT, DVGGS, and NKID. Residue Thr-395 participates in Mg(2+) binding. Residues 411–420 are G3 motif; sequence YRIYDVGGSR. The segment at 480 to 487 is G4 motif; it reads ILFLNKID. Residues 549 to 554 form a G5 motif region; that stretch reads TVATST.

This sequence belongs to the G-alpha family. G proteins are composed of 3 units; alpha, beta and gamma. The alpha chain contains the guanine nucleotide binding site.

Functionally, guanine nucleotide-binding proteins (G proteins) are involved as modulators or transducers in various transmembrane signaling systems. This is Guanine nucleotide-binding protein alpha-4 subunit (GPA4) from Mycosarcoma maydis (Corn smut fungus).